Consider the following 642-residue polypeptide: Serotransferrin (642 aa).

Transferrin-like domains are found at residues 1–280 (GIKE…SLKK) and 290–621 (IKWC…SLRQ). 2 residues coordinate Fe(3+): D25 and Y54. 3 disulfide bridges follow: C77–C158, C121–C137, and C186–C200. Residues T79, K83, A85, and G86 each contribute to the hydrogencarbonate site. Y152 provides a ligand contact to Fe(3+). H208 is a binding site for Fe(3+). 2 disulfide bridges follow: C293–C329 and C303–C320. D344 is a binding site for Fe(3+). 7 disulfides stabilise this stretch: C354/C633, C369/C594, C402/C480, C426/C622, C436/C450, C447/C463, and C520/C535. N-linked (GlcNAc...) asparagine glycosylation is present at N365. Y379 serves as a coordination point for Fe(3+). Hydrogencarbonate-binding residues include T404, R408, A410, and G411. A Fe(3+)-binding site is contributed by Y474. Residue H543 participates in Fe(3+) binding.

The protein belongs to the transferrin family. Monomer. Brain and liver; to a lesser extent in kidney and heart.

It localises to the secreted. Functionally, transferrins are iron binding transport proteins which can bind two Fe(3+) ions in association with the binding of an anion, usually bicarbonate. The chain is Serotransferrin (tf) from Gadus morhua (Atlantic cod).